Reading from the N-terminus, the 106-residue chain is Transcription initiation factor IIA subunit 2 (106 aa).

It belongs to the TFIIA subunit 2 family. As to quaternary structure, TFIIA is a heterodimer of the large unprocessed subunit 1 and a small subunit gamma. It was originally believed to be a heterotrimer of an alpha, a beta and a gamma subunit.

Its subcellular location is the nucleus. Functionally, TFIIA is a component of the transcription machinery of RNA polymerase II and plays an important role in transcriptional activation. TFIIA in a complex with TBP mediates transcriptional activity. This is Transcription initiation factor IIA subunit 2 (TFIIA-S) from Arabidopsis thaliana (Mouse-ear cress).